The chain runs to 142 residues: Hemoglobin subunit alpha-2 (142 aa).

Ser1 carries the post-translational modification N-acetylserine. Residues 1–142 enclose the Globin domain; that stretch reads SLSTKDKETV…LSRALSEKYR (142 aa). His59 serves as a coordination point for O2. His88 lines the heme b pocket.

The protein belongs to the globin family. Hb2 is a heterotetramer of two alpha-2 chains and two beta chains. As to expression, red blood cells.

Functionally, involved in oxygen transport from gills to the various peripheral tissues. The polypeptide is Hemoglobin subunit alpha-2 (hba2) (Trematomus newnesi (Dusky notothen)).